The chain runs to 690 residues: Glycine--tRNA ligase beta subunit (690 aa).

The protein belongs to the class-II aminoacyl-tRNA synthetase family. As to quaternary structure, tetramer of two alpha and two beta subunits.

The protein localises to the cytoplasm. The enzyme catalyses tRNA(Gly) + glycine + ATP = glycyl-tRNA(Gly) + AMP + diphosphate. The sequence is that of Glycine--tRNA ligase beta subunit from Desulfitobacterium hafniense (strain Y51).